Consider the following 490-residue polypeptide: Protein twist (490 aa).

Disordered stretches follow at residues 48–74 (QLQH…QHTQ), 98–167 (PSNE…TGGS), and 330–359 (LDGS…ETDE). The segment covering 54 to 64 (QHLHSHQHHQQ) has biased composition (basic residues). 2 stretches are compositionally biased toward low complexity: residues 65–74 (HQQQQQQHTQ) and 104–135 (STSS…NNPS). A compositionally biased stretch (basic residues) spans 339 to 351 (AFRKPRRRLKRKP). One can recognise a bHLH domain in the interval 362–413 (NQRVMANVRERQRTQSLNDAFKSLQQIIPTLPSDKLSKIQTLKLATRYIDFL).

Efficient DNA binding requires dimerization with another bHLH protein. Homodimer.

It localises to the nucleus. In terms of biological role, involved in the establishment and dorsoventral patterning of germ layers in the embryo. The protein is Protein twist of Drosophila erecta (Fruit fly).